We begin with the raw amino-acid sequence, 840 residues long: Probable inorganic carbon transporter subunit DabA (840 aa).

Residues Cys355, Asp357, His539, and Cys554 each coordinate Zn(2+).

It belongs to the inorganic carbon transporter (TC 9.A.2) DabA family. Forms a complex with DabB. Zn(2+) serves as cofactor.

It localises to the cell membrane. In terms of biological role, part of an energy-coupled inorganic carbon pump. The protein is Probable inorganic carbon transporter subunit DabA of Roseiflexus castenholzii (strain DSM 13941 / HLO8).